We begin with the raw amino-acid sequence, 221 residues long: uncharacterized protein (221 aa).

The protein resides in the mitochondrion. This is an uncharacterized protein from Paramecium tetraurelia.